Reading from the N-terminus, the 652-residue chain is Engulfment and cell motility protein 3 (652 aa).

The 173-residue stretch at 307–479 folds into the ELMO domain; the sequence is EQREQLQALR…VVREQLARTL (173 aa).

Probably interacts directly with the SH3-domain of DOCK1 via its SH3-binding site. Part of a complex with DOCK1 and RAC1. Interacts with ADGRB3.

The protein localises to the cytoplasm. In terms of biological role, involved in cytoskeletal rearrangements required for phagocytosis of apoptotic cells and cell motility. Acts in association with DOCK1 and CRK. Was initially proposed to be required in complex with DOCK1 to activate Rac Rho small GTPases. May enhance the guanine nucleotide exchange factor (GEF) activity of DOCK1. In Bos taurus (Bovine), this protein is Engulfment and cell motility protein 3 (ELMO3).